Here is a 56-residue protein sequence, read N- to C-terminus: Large ribosomal subunit protein bL33 (56 aa).

It belongs to the bacterial ribosomal protein bL33 family.

This chain is Large ribosomal subunit protein bL33, found in Haemophilus influenzae (strain 86-028NP).